A 306-amino-acid polypeptide reads, in one-letter code: Glutaminase (306 aa).

The substrate site is built by Ser-64, Asn-115, Glu-159, Asn-166, Tyr-190, Tyr-242, and Val-260.

Belongs to the glutaminase family. Homotetramer.

The enzyme catalyses L-glutamine + H2O = L-glutamate + NH4(+). This chain is Glutaminase, found in Vibrio cholerae serotype O1 (strain ATCC 39541 / Classical Ogawa 395 / O395).